The sequence spans 381 residues: Putative glycosyltransferase EpsD (381 aa).

It belongs to the glycosyltransferase group 1 family. Glycosyltransferase 4 subfamily.

Its function is as follows. May be involved in the production of the exopolysaccharide (EPS) component of the extracellular matrix during biofilm formation. EPS is responsible for the adhesion of chains of cells into bundles. Required for biofilm maintenance. In Bacillus subtilis (strain 168), this protein is Putative glycosyltransferase EpsD (epsD).